The chain runs to 256 residues: Probable sulfite/organosulfonate exporter TauE (256 aa).

Helical transmembrane passes span 5–25 (LLLP…FQTV), 33–53 (IVMG…AAVV), 76–96 (AVAA…LVLE), 103–123 (ATLL…SAAL), 142–162 (VFGG…IFQF), 172–190 (IRCA…RTLF), 199–219 (AAVC…TLLG), and 236–256 (FGVL…AWVL).

Belongs to the 4-toluene sulfonate uptake permease (TSUP) (TC 2.A.102) family.

The protein localises to the cell inner membrane. Could be a sulfite/organosulfonate exporter with a wide substrate range, including 3-sulfolactate and 3-sulfopyruvate. The protein is Probable sulfite/organosulfonate exporter TauE of Cupriavidus necator (strain ATCC 17699 / DSM 428 / KCTC 22496 / NCIMB 10442 / H16 / Stanier 337) (Ralstonia eutropha).